The chain runs to 118 residues: Down syndrome critical region protein 4 (118 aa).

The segment at 1 to 39 is disordered; that stretch reads MSLIILTRDDEPRIFTPDSDAASPALHSTSPLPDPASAS. Positions 28-39 are enriched in low complexity; sequence STSPLPDPASAS.

Mainly expressed in placenta.

This chain is Down syndrome critical region protein 4 (DSCR4), found in Homo sapiens (Human).